The primary structure comprises 149 residues: UPF0178 protein VC0395_A0405/VC395_0897 (149 aa).

Belongs to the UPF0178 family.

In Vibrio cholerae serotype O1 (strain ATCC 39541 / Classical Ogawa 395 / O395), this protein is UPF0178 protein VC0395_A0405/VC395_0897.